The chain runs to 864 residues: Calphotin (864 aa).

Residues 816–858 (LQTTDVSLLAIAATLDAIGEKLKDQKARNQQVMDRLCEIEKIL) are leucine-zipper.

Homodimer. Soma and axons of photoreceptor cells of compound eyes and ocelli.

The protein localises to the cytoplasm. Plays important roles in both rhabdomere development and in photoreceptor cell survival. Might function as a calcium-sequestering 'sponge' to regulate the amount of free cytoplasmic calcium. It binds 0.3 mole of Ca(2+) per mole of protein. This Drosophila melanogaster (Fruit fly) protein is Calphotin (Cpn).